Here is a 181-residue protein sequence, read N- to C-terminus: MLKRKELARKAVRLIVKKVPKEKESILKVDEFLGTLSTAYRKDKLLRNFFLSPQIDRNAKVKALESLAKKYDVPKEVLEVLEYLIDINAMALIPEIKRLYELELEKLMGMLKGELILAKKPSKKLLEKITKTINDILNRQIEIEVKEDPSLIGGFVFKTQAFVLDTSVKTQLEKLARVGGV.

The protein belongs to the ATPase delta chain family. F-type ATPases have 2 components, F(1) - the catalytic core - and F(0) - the membrane proton channel. F(1) has five subunits: alpha(3), beta(3), gamma(1), delta(1), epsilon(1). F(0) has three main subunits: a(1), b(2) and c(10-14). The alpha and beta chains form an alternating ring which encloses part of the gamma chain. F(1) is attached to F(0) by a central stalk formed by the gamma and epsilon chains, while a peripheral stalk is formed by the delta and b chains.

The protein localises to the cell inner membrane. Functionally, f(1)F(0) ATP synthase produces ATP from ADP in the presence of a proton or sodium gradient. F-type ATPases consist of two structural domains, F(1) containing the extramembraneous catalytic core and F(0) containing the membrane proton channel, linked together by a central stalk and a peripheral stalk. During catalysis, ATP synthesis in the catalytic domain of F(1) is coupled via a rotary mechanism of the central stalk subunits to proton translocation. Its function is as follows. This protein is part of the stalk that links CF(0) to CF(1). It either transmits conformational changes from CF(0) to CF(1) or is implicated in proton conduction. The chain is ATP synthase subunit delta from Aquifex aeolicus (strain VF5).